Here is a 327-residue protein sequence, read N- to C-terminus: GMP reductase (327 aa).

Cysteine 176 acts as the Thioimidate intermediate in catalysis. 205–228 contributes to the NADP(+) binding site; it reads IIADGGIRTHGDIAKSIRFGASMV.

It belongs to the IMPDH/GMPR family. GuaC type 2 subfamily.

The enzyme catalyses IMP + NH4(+) + NADP(+) = GMP + NADPH + 2 H(+). Catalyzes the irreversible NADPH-dependent deamination of GMP to IMP. It functions in the conversion of nucleobase, nucleoside and nucleotide derivatives of G to A nucleotides, and in maintaining the intracellular balance of A and G nucleotides. In Streptococcus gordonii (strain Challis / ATCC 35105 / BCRC 15272 / CH1 / DL1 / V288), this protein is GMP reductase.